The sequence spans 304 residues: Acetyl-coenzyme A carboxylase carboxyl transferase subunit beta (304 aa).

Positions Leu29–Pro298 constitute a CoA carboxyltransferase N-terminal domain. Zn(2+) is bound by residues Cys33, Cys36, Cys52, and Cys55. The segment at Cys33–Cys55 adopts a C4-type zinc-finger fold.

The protein belongs to the AccD/PCCB family. Acetyl-CoA carboxylase is a heterohexamer composed of biotin carboxyl carrier protein (AccB), biotin carboxylase (AccC) and two subunits each of ACCase subunit alpha (AccA) and ACCase subunit beta (AccD). The cofactor is Zn(2+).

The protein localises to the cytoplasm. It catalyses the reaction N(6)-carboxybiotinyl-L-lysyl-[protein] + acetyl-CoA = N(6)-biotinyl-L-lysyl-[protein] + malonyl-CoA. Its pathway is lipid metabolism; malonyl-CoA biosynthesis; malonyl-CoA from acetyl-CoA: step 1/1. In terms of biological role, component of the acetyl coenzyme A carboxylase (ACC) complex. Biotin carboxylase (BC) catalyzes the carboxylation of biotin on its carrier protein (BCCP) and then the CO(2) group is transferred by the transcarboxylase to acetyl-CoA to form malonyl-CoA. In Acaryochloris marina (strain MBIC 11017), this protein is Acetyl-coenzyme A carboxylase carboxyl transferase subunit beta.